We begin with the raw amino-acid sequence, 289 residues long: UTP--glucose-1-phosphate uridylyltransferase 2 (289 aa).

It belongs to the UDPGP type 2 family.

It catalyses the reaction alpha-D-glucose 1-phosphate + UTP + H(+) = UDP-alpha-D-glucose + diphosphate. It participates in glycolipid metabolism; diglucosyl-diacylglycerol biosynthesis. In terms of biological role, catalyzes the formation of UDP-glucose from glucose-1-phosphate and UTP. This is an intermediate step in the biosynthesis of diglucosyl-diacylglycerol (Glc2-DAG), i.e. a glycolipid found in the membrane, which is also used as a membrane anchor for lipoteichoic acid (LTA). The chain is UTP--glucose-1-phosphate uridylyltransferase 2 (gtaB2) from Staphylococcus saprophyticus subsp. saprophyticus (strain ATCC 15305 / DSM 20229 / NCIMB 8711 / NCTC 7292 / S-41).